Consider the following 292-residue polypeptide: Probable septum site-determining protein MinC (292 aa).

Residues 112–188 (DTAPPNDVAT…PQSSSALVIT (77 aa)) are disordered. The span at 128–137 (EATAEAAAKA) shows a compositional bias: low complexity. Over residues 140 to 150 (QDDEAYGEQAD) the composition is skewed to acidic residues. A compositionally biased stretch (polar residues) spans 171 to 185 (ANRPTATPPQSSSAL).

This sequence belongs to the MinC family. As to quaternary structure, interacts with MinD and FtsZ.

In terms of biological role, cell division inhibitor that blocks the formation of polar Z ring septums. Rapidly oscillates between the poles of the cell to destabilize FtsZ filaments that have formed before they mature into polar Z rings. Prevents FtsZ polymerization. The polypeptide is Probable septum site-determining protein MinC (Bordetella bronchiseptica (strain ATCC BAA-588 / NCTC 13252 / RB50) (Alcaligenes bronchisepticus)).